We begin with the raw amino-acid sequence, 623 residues long: Bifunctional methionine biosynthesis protein MetXA/MetW (623 aa).

Polar residues predominate over residues 1–17 (MTSGRSTRVTMFESQAS). Residues 1–30 (MTSGRSTRVTMFESQASMGEPSNEDLSSTD) are disordered. An AB hydrolase-1 domain is found at 77 to 385 (NAVLVCHAVS…TTNAGHDAFL (309 aa)). Serine 183 functions as the Nucleophile in the catalytic mechanism. Arginine 253 contacts substrate. Active-site residues include aspartate 348 and histidine 381. Aspartate 382 lines the substrate pocket. The tract at residues 417-619 (NVDEESILEI…NADTAVIAFH (203 aa)) is metW.

In the N-terminal section; belongs to the AB hydrolase superfamily. MetX family. The protein in the C-terminal section; belongs to the MetW family. As to quaternary structure, homodimer.

It localises to the cytoplasm. It carries out the reaction L-homoserine + acetyl-CoA = O-acetyl-L-homoserine + CoA. It functions in the pathway amino-acid biosynthesis; L-methionine biosynthesis via de novo pathway; O-acetyl-L-homoserine from L-homoserine: step 1/1. Transfers an acetyl group from acetyl-CoA to L-homoserine, forming acetyl-L-homoserine. This Rhodopirellula baltica (strain DSM 10527 / NCIMB 13988 / SH1) protein is Bifunctional methionine biosynthesis protein MetXA/MetW.